Here is a 300-residue protein sequence, read N- to C-terminus: MENVNFTLNLFIEYLQIEKNYSEYTIACYKHDIGEFFEFMEREQIKQLQQVSYSDVRLFLTELHQRKQSSRSIARKMSSLRSFYKFLLREKIVSENPFALASLPKKEQKIPHFLYPDELEQLFVVNDLNTAIGQRNQAMIELLYATGIRVSECCNIRLSHIDFSVCTILISGKGNKQRYVPFGTYAKEALERYIQDGRQQLASKAKTPTDVLFLNARGGALTPRGVRHILNDIVERAALSLKVSPHTFRHTFATHLLNEGADLRSVQELLGHAHLSSTQVYTHVTKDHLRYVYLHSHPRA.

The Core-binding (CB) domain occupies 2–88 (ENVNFTLNLF…SLRSFYKFLL (87 aa)). Residues 109-294 (KIPHFLYPDE…TKDHLRYVYL (186 aa)) enclose the Tyr recombinase domain. Catalysis depends on residues R149, K173, H246, R249, and H272. Residue Y281 is the O-(3'-phospho-DNA)-tyrosine intermediate of the active site.

This sequence belongs to the 'phage' integrase family. XerC subfamily. In terms of assembly, forms a cyclic heterotetrameric complex composed of two molecules of XerC and two molecules of XerD.

Its subcellular location is the cytoplasm. Its function is as follows. Site-specific tyrosine recombinase, which acts by catalyzing the cutting and rejoining of the recombining DNA molecules. The XerC-XerD complex is essential to convert dimers of the bacterial chromosome into monomers to permit their segregation at cell division. It also contributes to the segregational stability of plasmids. The sequence is that of Tyrosine recombinase XerC from Anoxybacillus flavithermus (strain DSM 21510 / WK1).